Reading from the N-terminus, the 1734-residue chain is Protein TIC 214 (1734 aa).

The next 6 helical transmembrane spans lie at Ile19 to Gly39, Phe68 to Leu88, Pro91 to His111, Val133 to Leu153, Val176 to Ile196, and Ile227 to Ile247. Positions Asn1433 to Gln1485 form a coiled coil.

Belongs to the TIC214 family. Part of the Tic complex.

Its subcellular location is the plastid. The protein localises to the chloroplast inner membrane. Its function is as follows. Involved in protein precursor import into chloroplasts. May be part of an intermediate translocation complex acting as a protein-conducting channel at the inner envelope. The chain is Protein TIC 214 from Lepidium virginicum (Virginia pepperweed).